The primary structure comprises 1586 residues: MSEPTKISILGRESIVADFGLWRNFVAKDLISDLSSTTYVLVTDTNLGSLYTPTFQKTFEAAAASITPAPRLLIHHVAPGESSKSRQTKADIEDWMLSQNPPCGRDTVIIALGGGVIGDLIGFVAATYMRGVRFVQVPTTLLAMVDSSIGGKTAIDTPLGKNLIGSIWQPSRIYIDLEFLETLPVREFINGMAEVIKTAAISSEEEFTALEDNADLILAAVRSEPKAGQGRFGGIRDILKARILASARHKAFVVSADEREGGLRNLLNWGHSIGHAIEAILTPQILHGECVAIGMVKEAELARHLGILKGVAVARVVKCISAYGLPTSMKDARVRKLTAGKHCSVDQLLFNMALDKKNDGPKKKVVLLSAIGRTHEPKASVVSNDDIGVVLAPSVEVHPGVPKSLNVTCAPPGSKSISNRALVLAALGSGTCRVKNLLHSDDTEVMLNALERLGAATFSWEEEGEVLVVNGKGGKIIASPTPLYLGNAGTASRFLTTVATLATPSSVDSSVLTGNNRMKQRPIGDLVDALTVNGAGVEYMESKGCLPLKIAASGGFAGGKINLAAKVSSQYVSSLLMCAPYAKEPVTLKLVGGKPISQPYIDMTTAMMRSFGIDVKKSTTEEHTYHIPQGHYVNPAEYIVESDASSATYPLAIAAVTGTTCTVPNIGSKSLQGDARFAVDVLRPMGCSVVQTDTSTTVTGPTDGVLQPLPDVDMEPMTDAFLTASVLAAVAQGKGANHTTRIYGIANQRVKECNRIKAMKDELAKFGVICREHDDGLEIDGIERSSLRQPSGGVFCYDDHRVAFSFSVLSLIAPQSTLILEKECVGKTWPGWWDALKQMFSVNLNGKELAEAEHAASSDEKRSSASVFIIGMRGAGKTTTGNWVAKALDRRFIDLDTELETSEGMTIPDIIKTRGWEGFRDAELAVLKRVLKDHPTGYVFACGGGVVEMPEARKLLTDYHKSKGNVLLIMRDIKLVMDFLQIDKTRPAYVEDMMGVWLRRKPWFQECSNIQYYSQHSTSTELALASEDFTRFMRVVTGQVDSLSLIKKKKHSFFVSLTLPDVEPSGDIITEACVGSDAVELRVDLLKDPAVDGDIPSIDYVNEQMSLLRRRTTLPVIFTIRTKSQGGRFPDDAHDAAMQLYRLAFRCGCEFVDLEIAFPDAMLRAVTEMKGYSKIIASHHDPKGTLSWANMSWIPSYNRALEYGDVIKLVGVANTLDDNNALRKFKTWAEEAHDVPLIAINMGDSGQLSRILNGFMTPVSHPSLPFKAAPGQLSAAEIRRGLSLMGEIKAQKFAIFGSPVSGSRSPALHNTLFAKMGLPHDYSRLETTKVEDVKDFIRAPDFGGASVTIPLKLDIMPLLDEVAQEAEIIGAVNTIVRVSNGNNPPRLIGYNTDWQGMIRCMRNAGVYGSTGSQSAVVIGGGGTARAAIFALHNMGFSPIYVVGRTASKLESMVSTFPTNYNIRVVDNRAQLDTVPQVAIGTIPADRPIDPVMRETLCHMFERAQEIDGTLIGKSSDTSKHRVLLEMAYKPAVTALMQLASDAGWSTIPGLEVLVGQGVHQFVHWTGITPLYHEARVSKHLDYFLSF.

The segment at methionine 1 to asparagine 384 is 3-dehydroquinate synthase. NAD(+) contacts are provided by residues aspartate 44 to asparagine 46, glutamate 81 to lysine 84, glycine 114 to valine 116, and aspartate 119. Residue arginine 130 coordinates 7-phospho-2-dehydro-3-deoxy-D-arabino-heptonate. NAD(+) is bound at residue threonine 139–threonine 140. The 7-phospho-2-dehydro-3-deoxy-D-arabino-heptonate site is built by aspartate 146 and lysine 152. Lysine 161 contributes to the NAD(+) binding site. Asparagine 162 contacts 7-phospho-2-dehydro-3-deoxy-D-arabino-heptonate. Residues phenylalanine 179–threonine 182 and asparagine 190 each bind NAD(+). Glutamate 194 serves as a coordination point for Zn(2+). 7-phospho-2-dehydro-3-deoxy-D-arabino-heptonate contacts are provided by residues glutamate 194 to lysine 197 and lysine 250. The active-site Proton acceptor; for 3-dehydroquinate synthase activity is glutamate 260. 7-phospho-2-dehydro-3-deoxy-D-arabino-heptonate-binding positions include arginine 264–asparagine 268 and histidine 271. Histidine 271 serves as a coordination point for Zn(2+). Histidine 275 serves as the catalytic Proton acceptor; for 3-dehydroquinate synthase activity. 2 residues coordinate 7-phospho-2-dehydro-3-deoxy-D-arabino-heptonate: histidine 287 and lysine 356. Histidine 287 serves as a coordination point for Zn(2+). Residues valine 397–valine 842 are EPSP synthase. Cysteine 824 (for EPSP synthase activity) is an active-site residue. A shikimate kinase region spans residues serine 864 to serine 1056. An ATP-binding site is contributed by glycine 871–threonine 878. A 3-dehydroquinase region spans residues leucine 1057–glutamate 1277. The active-site Proton acceptor; for 3-dehydroquinate dehydratase activity is the histidine 1180. Lysine 1208 serves as the catalytic Schiff-base intermediate with substrate; for 3-dehydroquinate dehydratase activity. Positions alanine 1290–phenylalanine 1586 are shikimate dehydrogenase.

This sequence in the N-terminal section; belongs to the sugar phosphate cyclases superfamily. Dehydroquinate synthase family. It in the 2nd section; belongs to the EPSP synthase family. The protein in the 3rd section; belongs to the shikimate kinase family. In the 4th section; belongs to the type-I 3-dehydroquinase family. This sequence in the C-terminal section; belongs to the shikimate dehydrogenase family. In terms of assembly, homodimer. Zn(2+) is required as a cofactor.

Its subcellular location is the cytoplasm. It catalyses the reaction 7-phospho-2-dehydro-3-deoxy-D-arabino-heptonate = 3-dehydroquinate + phosphate. The catalysed reaction is 3-dehydroquinate = 3-dehydroshikimate + H2O. The enzyme catalyses shikimate + NADP(+) = 3-dehydroshikimate + NADPH + H(+). It carries out the reaction shikimate + ATP = 3-phosphoshikimate + ADP + H(+). It catalyses the reaction 3-phosphoshikimate + phosphoenolpyruvate = 5-O-(1-carboxyvinyl)-3-phosphoshikimate + phosphate. It functions in the pathway metabolic intermediate biosynthesis; chorismate biosynthesis; chorismate from D-erythrose 4-phosphate and phosphoenolpyruvate: step 2/7. Its pathway is metabolic intermediate biosynthesis; chorismate biosynthesis; chorismate from D-erythrose 4-phosphate and phosphoenolpyruvate: step 3/7. It participates in metabolic intermediate biosynthesis; chorismate biosynthesis; chorismate from D-erythrose 4-phosphate and phosphoenolpyruvate: step 4/7. The protein operates within metabolic intermediate biosynthesis; chorismate biosynthesis; chorismate from D-erythrose 4-phosphate and phosphoenolpyruvate: step 5/7. It functions in the pathway metabolic intermediate biosynthesis; chorismate biosynthesis; chorismate from D-erythrose 4-phosphate and phosphoenolpyruvate: step 6/7. Functionally, the AROM polypeptide catalyzes 5 consecutive enzymatic reactions in prechorismate polyaromatic amino acid biosynthesis. The chain is Pentafunctional AROM polypeptide from Penicillium rubens (strain ATCC 28089 / DSM 1075 / NRRL 1951 / Wisconsin 54-1255) (Penicillium chrysogenum).